The chain runs to 345 residues: Large ribosomal subunit protein uL4 (345 aa).

Ala2 is modified (N-acetylalanine).

It belongs to the universal ribosomal protein uL4 family.

This chain is Large ribosomal subunit protein uL4 (rpl-4), found in Caenorhabditis elegans.